The chain runs to 616 residues: MIKKISLLTALSVTAFSGWAQDSGSDSLVVTANRFQQPVNTVLAPTSVVTREDIERWQANTVIDVMRRLPGVDTAQSGGMGQLSSLFIRGTNSSHVLILVDGIRLNQAGVTGSSDLSQFPLALVQRIEYIRGPRSAVYGSDAIGGVVNIITTRAKDGTTLNAGIGSHSYQNYGGSTQQTLGDNTRVTLAGDYTYTRGFDVVAEGNNGGLAQPDRDGFMNKTLYGALEHAFSDQWTGFVRGYGYSNRTAYDGYYNSFTPDVLVDTRQLYSQTWDAGLRFNNDLFHSQLLSSYSHSKDYNYDPHLGRYDSTATLDEIKQYNVQWTNAVDVGHGNIGAGVDWQKQSTEPGTSYVTNGYDLRNTGVYLTALQKFGDVTLEGAVRSDDNSQFGRHGTWQSSAAWEFIEGYRFIASYGTAYKAPNLGQLYGFYGNDHLDPEESKQWEGAFEGLTAGVNWRVSAYRNDVDNLIDFNNNLQEYYNVGKARIKGVEATASFDTGPLTHTLGYDYVDARNAATNALLVRRAKQQVKYQLDTQLYDFDWSLTYHYLGTRYDTDFSTYPTQNVKLGGVSLWDVAVSYPVTSHLTVRGKIANLFDKDYETAYGYATAGREYTLSGSYTF.

The first 20 residues, 1-20 (MIKKISLLTALSVTAFSGWA), serve as a signal peptide directing secretion. The TonB box motif lies at 26–33 (DSLVVTAN). The TBDR plug domain maps to 38 to 152 (PVNTVLAPTS…IGGVVNIITT (115 aa)). Cyanocob(III)alamin-binding positions include leucine 83, serine 85, asparagine 92, and 110–111 (VT). The TBDR beta-barrel domain maps to 155-616 (KDGTTLNAGI…EYTLSGSYTF (462 aa)). 3 beta stranded membrane-spanning segments follow: residues 158 to 165 (TTLNAGIG), 169 to 178 (YQNYGGSTQQ), and 184 to 195 (TRVTLAGDYTYT). Aspartate 199, glutamine 211, aspartate 213, and aspartate 215 together coordinate Ca(2+). Beta stranded transmembrane passes span 217–227 (FMNKTLYGALE) and 232–248 (DQWT…NRTA). Ca(2+) contacts are provided by tyrosine 249, aspartate 250, and aspartate 263. 17 beta stranded membrane-spanning segments follow: residues 265–279 (RQLY…LRFN), 281–298 (DLFH…KDYN), 311–327 (TLDE…NAVD), 330–339 (HGNIGAGVDW), 355–371 (YDLR…QKFG), 373–383 (VTLEGAVRSDD), 387–402 (FGRH…WEFI), 405–419 (YRFI…KAPN), 436–445 (ESKQWEGAFE), 451–460 (VNWRVSAYRN), 475–492 (YYNV…TASF), 496–511 (PLTH…ARNA), 519–531 (RRAK…QLDT), 537–552 (DWSL…YDTD), 560–574 (NVKL…VAVS), 587–598 (IANLFDKDYETA), and 604–616 (AGRE…SYTF). Threonine 311 contacts cyanocob(III)alamin. Arginine 519 provides a ligand contact to cyanocob(III)alamin. The short motif at 599–616 (YGYATAGREYTLSGSYTF) is the TonB C-terminal box element.

Belongs to the TonB-dependent receptor family. BtuB (TC 1.B.14.3.1) subfamily.

It is found in the cell outer membrane. Its function is as follows. Involved in the active translocation of vitamin B12 (cyanocobalamin) across the outer membrane to the periplasmic space. It derives its energy for transport by interacting with the trans-periplasmic membrane protein TonB. The chain is Vitamin B12 transporter BtuB from Cronobacter sakazakii (strain ATCC BAA-894) (Enterobacter sakazakii).